A 225-amino-acid chain; its full sequence is NAD(P)H-quinone oxidoreductase subunit K, chloroplastic (225 aa).

The [4Fe-4S] cluster site is built by cysteine 43, cysteine 44, cysteine 108, and cysteine 139.

The protein belongs to the complex I 20 kDa subunit family. In terms of assembly, NDH is composed of at least 16 different subunits, 5 of which are encoded in the nucleus. It depends on [4Fe-4S] cluster as a cofactor.

It localises to the plastid. It is found in the chloroplast thylakoid membrane. It catalyses the reaction a plastoquinone + NADH + (n+1) H(+)(in) = a plastoquinol + NAD(+) + n H(+)(out). The catalysed reaction is a plastoquinone + NADPH + (n+1) H(+)(in) = a plastoquinol + NADP(+) + n H(+)(out). Its function is as follows. NDH shuttles electrons from NAD(P)H:plastoquinone, via FMN and iron-sulfur (Fe-S) centers, to quinones in the photosynthetic chain and possibly in a chloroplast respiratory chain. The immediate electron acceptor for the enzyme in this species is believed to be plastoquinone. Couples the redox reaction to proton translocation, and thus conserves the redox energy in a proton gradient. In Manihot esculenta (Cassava), this protein is NAD(P)H-quinone oxidoreductase subunit K, chloroplastic.